Consider the following 452-residue polypeptide: C4-dicarboxylate transport protein 1 (452 aa).

The next 9 helical transmembrane spans lie at 18–38 (FQVV…PSVG), 51–71 (LIKM…IAGM), 83–103 (LALL…LLLV), 151–171 (AFAK…GFAL), 191–211 (VLFT…FGAM), 229–249 (LMGA…GAIA), 304–324 (GYSF…VFIA), 337–357 (ITLL…TGSG), and 359–379 (IVLA…LALI). Residues 426-452 (WEEAQEPERVLDKKTEHMPVSAMSDAG) are disordered. Basic and acidic residues predominate over residues 431-442 (EPERVLDKKTEH).

This sequence belongs to the dicarboxylate/amino acid:cation symporter (DAACS) (TC 2.A.23) family.

It is found in the cell inner membrane. Its function is as follows. Responsible for the transport of dicarboxylates such as succinate, fumarate, and malate from the periplasm across the membrane. This is C4-dicarboxylate transport protein 1 from Polaromonas naphthalenivorans (strain CJ2).